The primary structure comprises 282 residues: Orotidine 5'-phosphate decarboxylase (282 aa).

Lys95 functions as the Proton donor in the catalytic mechanism.

This sequence belongs to the OMP decarboxylase family. Type 2 subfamily.

The enzyme catalyses orotidine 5'-phosphate + H(+) = UMP + CO2. It participates in pyrimidine metabolism; UMP biosynthesis via de novo pathway; UMP from orotate: step 2/2. In Mycobacterium leprae (strain TN), this protein is Orotidine 5'-phosphate decarboxylase (pyrF).